Here is a 238-residue protein sequence, read N- to C-terminus: LRRN4 C-terminal-like protein (238 aa).

The first 22 residues, methionine 1 to proline 22, serve as a signal peptide directing secretion. At leucine 23 to threonine 194 the chain is on the extracellular side. Residues proline 82–aspartate 176 enclose the Fibronectin type-III domain. N-linked (GlcNAc...) asparagine glycosylation occurs at asparagine 132. A helical transmembrane segment spans residues leucine 195–valine 215. At tryptophan 216–leucine 238 the chain is on the cytoplasmic side.

Its subcellular location is the membrane. The chain is LRRN4 C-terminal-like protein (LRRN4CL) from Homo sapiens (Human).